The sequence spans 32 residues: U3-theraphotoxin-Hhn1r (32 aa).

3 disulfides stabilise this stretch: Cys2/Cys15, Cys9/Cys20, and Cys14/Cys27.

It belongs to the neurotoxin 10 (Hwtx-1) family. 16 (Hntx-8) subfamily. As to expression, expressed by the venom gland.

It localises to the secreted. Ion channel inhibitor. The polypeptide is U3-theraphotoxin-Hhn1r (Cyriopagopus hainanus (Chinese bird spider)).